We begin with the raw amino-acid sequence, 376 residues long: Riboflavin biosynthesis protein RibD (376 aa).

Positions 1–150 (MEDFSEQQLF…QPYLYQRTHN (150 aa)) are deaminase. In terms of domain architecture, CMP/dCMP-type deaminase spans 6–128 (EQQLFFMRRA…MLRQAGIQVY (123 aa)). Zn(2+) is bound at residue H55. The active-site Proton donor is the E57. Positions 80 and 89 each coordinate Zn(2+). The interval 151–376 (FPWTILKSAA…SPQVFEPIRN (226 aa)) is reductase. Residue A159 coordinates NADP(+). Substrate is bound at residue S173. An NADP(+)-binding site is contributed by W175. Position 189 (R189) interacts with substrate. 2 residues coordinate NADP(+): T201 and D205. 2 residues coordinate substrate: L209 and R212. S230 lines the NADP(+) pocket. Residue E300 participates in substrate binding. 302 to 308 (GTTLHTS) lines the NADP(+) pocket.

In the N-terminal section; belongs to the cytidine and deoxycytidylate deaminase family. The protein in the C-terminal section; belongs to the HTP reductase family. Zn(2+) is required as a cofactor.

The enzyme catalyses 2,5-diamino-6-hydroxy-4-(5-phosphoribosylamino)-pyrimidine + H2O + H(+) = 5-amino-6-(5-phospho-D-ribosylamino)uracil + NH4(+). It carries out the reaction 5-amino-6-(5-phospho-D-ribitylamino)uracil + NADP(+) = 5-amino-6-(5-phospho-D-ribosylamino)uracil + NADPH + H(+). The protein operates within cofactor biosynthesis; riboflavin biosynthesis; 5-amino-6-(D-ribitylamino)uracil from GTP: step 2/4. Its pathway is cofactor biosynthesis; riboflavin biosynthesis; 5-amino-6-(D-ribitylamino)uracil from GTP: step 3/4. Its function is as follows. Converts 2,5-diamino-6-(ribosylamino)-4(3h)-pyrimidinone 5'-phosphate into 5-amino-6-(ribosylamino)-2,4(1h,3h)-pyrimidinedione 5'-phosphate. In Chlamydia pneumoniae (Chlamydophila pneumoniae), this protein is Riboflavin biosynthesis protein RibD (ribD).